A 1509-amino-acid chain; its full sequence is DNA-directed RNA polymerase subunit beta' (1509 aa).

Zn(2+) is bound by residues cysteine 75, cysteine 77, cysteine 90, and cysteine 93. Residues aspartate 474, aspartate 476, and aspartate 478 each contribute to the Mg(2+) site. Residues cysteine 804, cysteine 878, cysteine 885, and cysteine 888 each contribute to the Zn(2+) site.

The protein belongs to the RNA polymerase beta' chain family. The RNAP catalytic core consists of 2 alpha, 1 beta, 1 beta' and 1 omega subunit. When a sigma factor is associated with the core the holoenzyme is formed, which can initiate transcription. Mg(2+) is required as a cofactor. It depends on Zn(2+) as a cofactor.

It carries out the reaction RNA(n) + a ribonucleoside 5'-triphosphate = RNA(n+1) + diphosphate. Its function is as follows. DNA-dependent RNA polymerase catalyzes the transcription of DNA into RNA using the four ribonucleoside triphosphates as substrates. The sequence is that of DNA-directed RNA polymerase subunit beta' from Sulfurovum sp. (strain NBC37-1).